The sequence spans 261 residues: Serine acetyltransferase (261 aa).

This sequence belongs to the transferase hexapeptide repeat family.

The protein resides in the cytoplasm. It carries out the reaction L-serine + acetyl-CoA = O-acetyl-L-serine + CoA. The protein operates within amino-acid biosynthesis; L-cysteine biosynthesis; L-cysteine from L-serine: step 1/2. In Buchnera aphidicola subsp. Schizaphis graminum (strain Sg), this protein is Serine acetyltransferase (cysE).